The primary structure comprises 280 residues: Energy-coupling factor transporter ATP-binding protein EcfA (280 aa).

The 236-residue stretch at isoleucine 5 to glutamate 240 folds into the ABC transporter domain. ATP is bound at residue glycine 40–serine 47.

The protein belongs to the ABC transporter superfamily. Energy-coupling factor EcfA family. As to quaternary structure, forms a stable energy-coupling factor (ECF) transporter complex composed of 2 membrane-embedded substrate-binding proteins (S component), 2 ATP-binding proteins (A component) and 2 transmembrane proteins (T component).

The protein resides in the cell membrane. Its function is as follows. ATP-binding (A) component of a common energy-coupling factor (ECF) ABC-transporter complex. Unlike classic ABC transporters this ECF transporter provides the energy necessary to transport a number of different substrates. The chain is Energy-coupling factor transporter ATP-binding protein EcfA from Pediococcus pentosaceus (strain ATCC 25745 / CCUG 21536 / LMG 10740 / 183-1w).